The sequence spans 158 residues: 2-C-methyl-D-erythritol 2,4-cyclodiphosphate synthase (158 aa).

A divalent metal cation contacts are provided by Asp9 and His11. Residues 9–11 (DVH) and 35–36 (HS) contribute to the 4-CDP-2-C-methyl-D-erythritol 2-phosphate site. Position 43 (His43) interacts with a divalent metal cation. 4-CDP-2-C-methyl-D-erythritol 2-phosphate-binding positions include 57–59 (DIG), 62–66 (FPDTD), 101–107 (AQKPKMA), 133–136 (TTTE), Phe140, and Arg143.

This sequence belongs to the IspF family. In terms of assembly, homotrimer. The cofactor is a divalent metal cation.

The catalysed reaction is 4-CDP-2-C-methyl-D-erythritol 2-phosphate = 2-C-methyl-D-erythritol 2,4-cyclic diphosphate + CMP. The protein operates within isoprenoid biosynthesis; isopentenyl diphosphate biosynthesis via DXP pathway; isopentenyl diphosphate from 1-deoxy-D-xylulose 5-phosphate: step 4/6. Functionally, involved in the biosynthesis of isopentenyl diphosphate (IPP) and dimethylallyl diphosphate (DMAPP), two major building blocks of isoprenoid compounds. Catalyzes the conversion of 4-diphosphocytidyl-2-C-methyl-D-erythritol 2-phosphate (CDP-ME2P) to 2-C-methyl-D-erythritol 2,4-cyclodiphosphate (ME-CPP) with a corresponding release of cytidine 5-monophosphate (CMP). This Bacillus velezensis (strain DSM 23117 / BGSC 10A6 / LMG 26770 / FZB42) (Bacillus amyloliquefaciens subsp. plantarum) protein is 2-C-methyl-D-erythritol 2,4-cyclodiphosphate synthase.